The following is a 254-amino-acid chain: Adenosylcobinamide-GDP ribazoletransferase (254 aa).

The next 6 membrane-spanning stretches (helical) occupy residues 28–48 (FRQT…IVAL), 62–81 (IGVY…IDGI), 109–129 (VGVG…LGVL), 138–158 (VTFI…ALLV), 179–199 (LSLF…PYLG), and 200–220 (ASPT…IKQW).

The protein belongs to the CobS family. Requires Mg(2+) as cofactor.

It is found in the cell membrane. It carries out the reaction alpha-ribazole + adenosylcob(III)inamide-GDP = adenosylcob(III)alamin + GMP + H(+). The catalysed reaction is alpha-ribazole 5'-phosphate + adenosylcob(III)inamide-GDP = adenosylcob(III)alamin 5'-phosphate + GMP + H(+). It participates in cofactor biosynthesis; adenosylcobalamin biosynthesis; adenosylcobalamin from cob(II)yrinate a,c-diamide: step 7/7. Functionally, joins adenosylcobinamide-GDP and alpha-ribazole to generate adenosylcobalamin (Ado-cobalamin). Also synthesizes adenosylcobalamin 5'-phosphate from adenosylcobinamide-GDP and alpha-ribazole 5'-phosphate. The chain is Adenosylcobinamide-GDP ribazoletransferase from Haloquadratum walsbyi (strain DSM 16790 / HBSQ001).